Reading from the N-terminus, the 159-residue chain is VAICNPLLYTISMPKSLCMKLVAGSYLGGVLNSLTQTCCLLPLPFCGPNVINHYFCDTNPLLKLTCSDGRLNELLLVTFNGTISMTVLLIIVISYVYILVSILSIRSARGRHKAFSTCASHLLTVTLFYVPAGLSHMQPGSKYSLDMEKVTAVFYTLLV.

Over 1 to 16 the chain is Cytoplasmic; sequence VAICNPLLYTISMPKS. A helical transmembrane segment spans residues 17 to 41; it reads LCMKLVAGSYLGGVLNSLTQTCCLL. At 42–82 the chain is on the extracellular side; the sequence is PLPFCGPNVINHYFCDTNPLLKLTCSDGRLNELLLVTFNGT. Asn-80 is a glycosylation site (N-linked (GlcNAc...) asparagine). Residues 83–103 form a helical membrane-spanning segment; that stretch reads ISMTVLLIIVISYVYILVSIL. At 104 to 116 the chain is on the cytoplasmic side; that stretch reads SIRSARGRHKAFS. Residues 117–137 form a helical membrane-spanning segment; the sequence is TCASHLLTVTLFYVPAGLSHM. The Extracellular portion of the chain corresponds to 138 to 148; the sequence is QPGSKYSLDME. A helical membrane pass occupies residues 149–159; sequence KVTAVFYTLLV.

It belongs to the G-protein coupled receptor 1 family.

It localises to the cell membrane. Its function is as follows. Odorant receptor. The polypeptide is Olfactory receptor-like protein COR8 (COR8) (Gallus gallus (Chicken)).